Here is a 235-residue protein sequence, read N- to C-terminus: 6-carboxyhexanoate--CoA ligase (235 aa).

This sequence belongs to the BioW family. As to quaternary structure, homodimer. It depends on Mg(2+) as a cofactor.

It catalyses the reaction heptanedioate + ATP + CoA = 6-carboxyhexanoyl-CoA + AMP + diphosphate. Its pathway is metabolic intermediate metabolism; pimeloyl-CoA biosynthesis; pimeloyl-CoA from pimelate: step 1/1. In terms of biological role, catalyzes the transformation of pimelate into pimeloyl-CoA with concomitant hydrolysis of ATP to AMP. This Desulfovibrio desulfuricans (strain ATCC 27774 / DSM 6949 / MB) protein is 6-carboxyhexanoate--CoA ligase.